Reading from the N-terminus, the 285-residue chain is ATP phosphoribosyltransferase (285 aa).

The protein belongs to the ATP phosphoribosyltransferase family. Long subfamily. The cofactor is Mg(2+).

The protein resides in the cytoplasm. The enzyme catalyses 1-(5-phospho-beta-D-ribosyl)-ATP + diphosphate = 5-phospho-alpha-D-ribose 1-diphosphate + ATP. The protein operates within amino-acid biosynthesis; L-histidine biosynthesis; L-histidine from 5-phospho-alpha-D-ribose 1-diphosphate: step 1/9. Feedback inhibited by histidine. Its function is as follows. Catalyzes the condensation of ATP and 5-phosphoribose 1-diphosphate to form N'-(5'-phosphoribosyl)-ATP (PR-ATP). Has a crucial role in the pathway because the rate of histidine biosynthesis seems to be controlled primarily by regulation of HisG enzymatic activity. The protein is ATP phosphoribosyltransferase of Methanocella arvoryzae (strain DSM 22066 / NBRC 105507 / MRE50).